We begin with the raw amino-acid sequence, 855 residues long: DNA mismatch repair protein MutS (855 aa).

Gly618–Ser625 provides a ligand contact to ATP.

It belongs to the DNA mismatch repair MutS family.

In terms of biological role, this protein is involved in the repair of mismatches in DNA. It is possible that it carries out the mismatch recognition step. This protein has a weak ATPase activity. In Shewanella loihica (strain ATCC BAA-1088 / PV-4), this protein is DNA mismatch repair protein MutS.